A 67-amino-acid polypeptide reads, in one-letter code: Protein AaeX (67 aa).

The next 2 membrane-spanning stretches (helical) occupy residues 3 to 23 and 43 to 63; these read LFPV…ELLL and FVWH…YLIS.

This sequence belongs to the AaeX family.

The protein resides in the cell membrane. The sequence is that of Protein AaeX from Escherichia coli (strain K12 / DH10B).